Consider the following 563-residue polypeptide: Coiled-coil domain-containing protein 38 (563 aa).

Positions 128-211 (TKKKTIKRFE…SIKSDIAKTE (84 aa)) form a coiled coil. Residues 265 to 310 (DNSIDSDKMSVSEEWSSRRGSQGGRHGKHTLGQDSRKSSGFTRPES) form a disordered region. The segment covering 269–281 (DSDKMSVSEEWSS) has biased composition (basic and acidic residues). 2 coiled-coil regions span residues 361–415 (QDVD…RSRL) and 454–522 (NAVQ…AVAQ). The interval 543–563 (QELLLVSDTRSKSQDEEYFFS) is disordered.

As to quaternary structure, interacts with CCDC42, CFAP53, IFT88 and ODF2. Interacts with CCDC146. Interacts with TEKT3. Interacts with ubiquitinated histone H2A. As to expression, expressed exclusively in testis where it is detected mainly in spermatogonia and spermatocytes (at protein level).

It localises to the cytoplasm. The protein resides in the cytoskeleton. The protein localises to the microtubule organizing center. Its subcellular location is the centrosome. It is found in the perinuclear region. It localises to the cell projection. The protein resides in the cilium. The protein localises to the flagellum. In terms of biological role, essential for male fertility. Required for sperm flagellum biogenesis. Also required for acrosome biogenesis. Required for the attachment of developing acrosomes to the nucleus during spermiogenesis and may be involved in the transport of fibrous sheath components. In Mus musculus (Mouse), this protein is Coiled-coil domain-containing protein 38 (Ccdc38).